A 512-amino-acid chain; its full sequence is MNSKIEIKPGRLTLAELRRMAKAPVGVRLEEKCKGKINASVQTVGEVIRQGRVIYGINTGFGLLANTIIPNEELEHLQRSLILSHAAGVGAFMADSTVRLMMVLKINSLARGYSGIRLEVIEALVQLLNAEVYPSVPQKGSVGASGDLAPLAHMSIVLLGEGEASYRGQRLSGREGLELAGLSPITLGPKEGLALLNGTQASTAFALQGLFAAEELFATAMVSGSLSLDAALGSRRPFNPLIHAVRGHKSQIDVAASYRQLLEHSEIERSHKFCEAVQDPYSLRCQPQVMGACLNQIRNAAEVIGTEANAVSDNPLVFCKENDIISGGNFHAEPIAMVADNLALAIAEIGALPERRTALLIDSHMSGLPPFLVDKGGLNSGFMIAQVTAAALASENKSLAHPASVDSLPTSANQEDHVSMATFAARRLLEMADNTAGILAIELLAACQGIDFRAPLKTSPLLEEAKSIVRQVVAFYDQDRYLAPDIKNAQALVQAGAFNHLVSRDLLPSFNR.

The segment at residues 144–146 (ASG) is a cross-link (5-imidazolinone (Ala-Gly)). Position 145 is a 2,3-didehydroalanine (Ser) (serine 145).

It belongs to the PAL/histidase family. In terms of processing, contains an active site 4-methylidene-imidazol-5-one (MIO), which is formed autocatalytically by cyclization and dehydration of residues Ala-Ser-Gly.

It is found in the cytoplasm. The catalysed reaction is L-histidine = trans-urocanate + NH4(+). It participates in amino-acid degradation; L-histidine degradation into L-glutamate; N-formimidoyl-L-glutamate from L-histidine: step 1/3. This chain is Histidine ammonia-lyase, found in Desulfotalea psychrophila (strain LSv54 / DSM 12343).